A 149-amino-acid chain; its full sequence is Transcriptional regulator MraZ (149 aa).

2 SpoVT-AbrB domains span residues 6-52 (RSYR…TPED) and 81-124 (VEEL…SEEE).

The protein belongs to the MraZ family. In terms of assembly, forms oligomers.

The protein resides in the cytoplasm. It localises to the nucleoid. The polypeptide is Transcriptional regulator MraZ (Oleidesulfovibrio alaskensis (strain ATCC BAA-1058 / DSM 17464 / G20) (Desulfovibrio alaskensis)).